Consider the following 265-residue polypeptide: NAD kinase 1 (265 aa).

Catalysis depends on Asp45, which acts as the Proton acceptor. NAD(+) contacts are provided by residues 45–46 (DG), His50, 122–123 (NE), Arg148, Asp150, and Ala185.

It belongs to the NAD kinase family. A divalent metal cation is required as a cofactor.

It localises to the cytoplasm. It carries out the reaction NAD(+) + ATP = ADP + NADP(+) + H(+). In terms of biological role, involved in the regulation of the intracellular balance of NAD and NADP, and is a key enzyme in the biosynthesis of NADP. Catalyzes specifically the phosphorylation on 2'-hydroxyl of the adenosine moiety of NAD to yield NADP. This is NAD kinase 1 from Halalkalibacterium halodurans (strain ATCC BAA-125 / DSM 18197 / FERM 7344 / JCM 9153 / C-125) (Bacillus halodurans).